The primary structure comprises 205 residues: Nitrophorin-4 (205 aa).

Positions 1-21 (MKSYTSLLAVAILCLFGGVNG) are cleaved as a signal peptide. 2 cysteine pairs are disulfide-bonded: Cys-23/Cys-143 and Cys-62/Cys-192. Position 80 (His-80) interacts with heme.

The protein belongs to the calycin superfamily. Nitrophorin family. Heme b serves as cofactor. Salivary gland (at protein level).

The protein localises to the secreted. The enzyme catalyses 3 nitrite + 2 H(+) = 2 nitric oxide + nitrate + H2O. Its function is as follows. Heme-based protein that delivers nitric oxide gas (NO) to the victim while feeding, resulting in vasodilation and inhibition of platelet aggregation. Reversibly binds nitric oxide (NO). Also binds tightly to histamine, which is released by the host to induce wound healing. NO release is pH dependent and linked to loop dynamics. The sequence is that of Nitrophorin-4 from Rhodnius prolixus (Triatomid bug).